A 355-amino-acid polypeptide reads, in one-letter code: Heat-inducible transcription repressor HrcA (355 aa).

It belongs to the HrcA family.

Negative regulator of class I heat shock genes (grpE-dnaK-dnaJ and groELS operons). Prevents heat-shock induction of these operons. This chain is Heat-inducible transcription repressor HrcA, found in Nitratidesulfovibrio vulgaris (strain ATCC 29579 / DSM 644 / CCUG 34227 / NCIMB 8303 / VKM B-1760 / Hildenborough) (Desulfovibrio vulgaris).